A 137-amino-acid polypeptide reads, in one-letter code: Small ribosomal subunit protein uS9 (137 aa).

Residues 105-117 (LKIEGHLSRDPRA) are compositionally biased toward basic and acidic residues. The segment at 105–137 (LKIEGHLSRDPRAKERRKYGLKKARKAPQFSKR) is disordered. A compositionally biased stretch (basic residues) spans 118–137 (KERRKYGLKKARKAPQFSKR).

The protein belongs to the universal ribosomal protein uS9 family.

In Prochlorococcus marinus (strain MIT 9211), this protein is Small ribosomal subunit protein uS9.